Consider the following 689-residue polypeptide: Homoaconitase, mitochondrial (689 aa).

A mitochondrion-targeting transit peptide spans 1–17; it reads MVVLRRSFHVYTRLQRG. 3 residues coordinate [4Fe-4S] cluster: cysteine 336, cysteine 403, and cysteine 406.

This sequence belongs to the aconitase/IPM isomerase family. Requires [4Fe-4S] cluster as cofactor.

It localises to the mitochondrion. The enzyme catalyses (2R,3S)-homoisocitrate = cis-homoaconitate + H2O. The protein operates within amino-acid biosynthesis; L-lysine biosynthesis via AAA pathway; L-alpha-aminoadipate from 2-oxoglutarate: step 3/5. Catalyzes the reversible hydration of cis-homoaconitate to (2R,3S)-homoisocitrate, a step in the alpha-aminoadipate pathway for lysine biosynthesis. The sequence is that of Homoaconitase, mitochondrial (LYS4) from Candida glabrata (strain ATCC 2001 / BCRC 20586 / JCM 3761 / NBRC 0622 / NRRL Y-65 / CBS 138) (Yeast).